Consider the following 188-residue polypeptide: Acireductone dioxygenase (188 aa).

Residues 1 to 20 (MSRLRIFADSNPTTPHFDSR) are disordered. Fe(2+) is bound by residues H97, H99, E103, and H141. H97, H99, E103, and H141 together coordinate Ni(2+).

This sequence belongs to the acireductone dioxygenase (ARD) family. As to quaternary structure, monomer. The cofactor is Fe(2+). Ni(2+) is required as a cofactor.

The catalysed reaction is 1,2-dihydroxy-5-(methylsulfanyl)pent-1-en-3-one + O2 = 3-(methylsulfanyl)propanoate + CO + formate + 2 H(+). The enzyme catalyses 1,2-dihydroxy-5-(methylsulfanyl)pent-1-en-3-one + O2 = 4-methylsulfanyl-2-oxobutanoate + formate + 2 H(+). It functions in the pathway amino-acid biosynthesis; L-methionine biosynthesis via salvage pathway; L-methionine from S-methyl-5-thio-alpha-D-ribose 1-phosphate: step 5/6. Functionally, catalyzes 2 different reactions between oxygen and the acireductone 1,2-dihydroxy-3-keto-5-methylthiopentene (DHK-MTPene) depending upon the metal bound in the active site. Fe-containing acireductone dioxygenase (Fe-ARD) produces formate and 2-keto-4-methylthiobutyrate (KMTB), the alpha-ketoacid precursor of methionine in the methionine recycle pathway. Ni-containing acireductone dioxygenase (Ni-ARD) produces methylthiopropionate, carbon monoxide and formate, and does not lie on the methionine recycle pathway. This is Acireductone dioxygenase from Xanthomonas campestris pv. campestris (strain 8004).